A 166-amino-acid polypeptide reads, in one-letter code: Disulfide bond formation protein B (166 aa).

Residues 1-12 (MKITKLPSYRQT) are Cytoplasmic-facing. The helical transmembrane segment at 13-29 (ALIIFAGCVGLILAALY) threads the bilayer. Topologically, residues 30 to 47 (MQEVLGLHPCPLCITQRI) are periplasmic. A disulfide bridge links Cys-39 with Cys-42. The helical transmembrane segment at 48–64 (FIIGVGLISLIAAIHNP) threads the bilayer. Over 65–70 (AALGRK) the chain is Cytoplasmic. A helical transmembrane segment spans residues 71–88 (VYGCLATLSGVIGAGVSA). Over 89-145 (RHVWLQNLPEDQVPACGPDLAYMFDAFPLLDALKLLFAGDGNCADVVASFLGLSIPG) the chain is Periplasmic. Residues Cys-104 and Cys-131 are joined by a disulfide bond. The chain crosses the membrane as a helical span at residues 146–164 (WTFVAFVGLIAISVWQGLR). The Cytoplasmic segment spans residues 165–166 (KA).

Belongs to the DsbB family.

It is found in the cell inner membrane. Functionally, required for disulfide bond formation in some periplasmic proteins. Acts by oxidizing the DsbA protein. This Saccharophagus degradans (strain 2-40 / ATCC 43961 / DSM 17024) protein is Disulfide bond formation protein B.